Here is a 101-residue protein sequence, read N- to C-terminus: NADH-quinone oxidoreductase subunit K (101 aa).

3 helical membrane passes run 4–24, 30–50, and 61–81; these read LSHYLVLGAVLFAIGVVGIFL, IILLMSIELMLLAVNINFVAF, and IFVFFILTVAAAEAAIGLAIL.

This sequence belongs to the complex I subunit 4L family. In terms of assembly, NDH-1 is composed of 14 different subunits. Subunits NuoA, H, J, K, L, M, N constitute the membrane sector of the complex.

It localises to the cell inner membrane. The catalysed reaction is a quinone + NADH + 5 H(+)(in) = a quinol + NAD(+) + 4 H(+)(out). NDH-1 shuttles electrons from NADH, via FMN and iron-sulfur (Fe-S) centers, to quinones in the respiratory chain. The immediate electron acceptor for the enzyme in this species is believed to be ubiquinone. Couples the redox reaction to proton translocation (for every two electrons transferred, four hydrogen ions are translocated across the cytoplasmic membrane), and thus conserves the redox energy in a proton gradient. The polypeptide is NADH-quinone oxidoreductase subunit K (Nitrosomonas eutropha (strain DSM 101675 / C91 / Nm57)).